A 143-amino-acid polypeptide reads, in one-letter code: Peptide methionine sulfoxide reductase MsrB (143 aa).

Positions 16–139 constitute a MsrB domain; the sequence is DAELRRRLTP…NSAALNFESR (124 aa). The Zn(2+) site is built by Cys-55, Cys-58, Cys-104, and Cys-107. Catalysis depends on Cys-128, which acts as the Nucleophile.

This sequence belongs to the MsrB Met sulfoxide reductase family. The cofactor is Zn(2+).

It carries out the reaction L-methionyl-[protein] + [thioredoxin]-disulfide + H2O = L-methionyl-(R)-S-oxide-[protein] + [thioredoxin]-dithiol. The polypeptide is Peptide methionine sulfoxide reductase MsrB (Burkholderia multivorans (strain ATCC 17616 / 249)).